The sequence spans 192 residues: Dynein axonemal light chain 1 (192 aa).

LRR repeat units lie at residues 49–70 (NCER…NGLK), 71–92 (NLKI…EAVG), 94–115 (TLEE…HVMK), and 116–137 (KLKV…LKLA). The 43-residue stretch at 150 to 192 (NPLEEKYSADGNWIEEATKRLPKLKKLDGNPVIKQEEETEGES) folds into the LRRCT domain.

Belongs to the dynein light chain LC1-type family. Interacts with DNAH5, a outer arm dynein heavy chain. Interacts with tubulin located within the A-tubule of the outer doublets in a ATP-independent manner.

It localises to the cytoplasm. It is found in the cytoskeleton. The protein localises to the cilium axoneme. Functionally, part of the multisubunit axonemal ATPase complexes that generate the force for cilia motility and govern beat frequency. Component of the outer arm dynein (ODA). May be involved in a mechanosensory feedback mechanism controlling ODA activity based on external conformational cues by tethering the outer arm dynein heavy chain (DNAH5) to the microtubule within the axoneme. The protein is Dynein axonemal light chain 1 (dnal1) of Danio rerio (Zebrafish).